We begin with the raw amino-acid sequence, 559 residues long: MTQVSHIGSSHFNINSSIKTALPLINSQYNSLVNESTISSNINLPFRLDAPSLFNGLPEEWGPTDAELSTHSNVNYPGLTEATIDYKFCSTLNSYFDTNQRFGNVPNDTYLMANSMAANIENNSWHNSRYYFDGNHPLSQWLPVPVNCWSNNNYIRDDFYDKSIQEEEFKSRSVLQTNEKNSTNVSSDINHYKPLITDENENLKMTKPTHNLLNNDSINLCRFPQNEIIMPDLINAPSPTLTNNNLFYSCGDHRSGKTEDLPSSDDLEQFAKMFKQRRIKLGYTQADVGLALGTLYGNVFSQTTICRFEALQLSFKNMCKLRPLLQKWLHEADSSSESPTNFDKISAQSRKRKKRTSIEANVKSILESSFMKLSKPSAQDISSLAEKLSLEKEVVRVWFCNRRQKEKRITPSFDVNEQFDNEVSSTMPYSTLNDDRNEKTIKNSFENHEKLIKQTGETNHEQNNNSSVKRLKIRKEPDQISINDENTSCRAESSGIVPDTHYRQECDNHSICGYNIHDIHESSVLMSDPVSFYPRSFFMKNNIYSNGTTPTLFDHSQMI.

A POU-specific domain is found at 259–333 (EDLPSSDDLE…LLQKWLHEAD (75 aa)). A DNA-binding region (homeobox) is located at residues 351-410 (KRKKRTSIEANVKSILESSFMKLSKPSAQDISSLAEKLSLEKEVVRVWFCNRRQKEKRIT).

The protein belongs to the POU transcription factor family.

The protein resides in the nucleus. The chain is POU domain protein 1 (POU1) from Dugesia japonica (Planarian).